Reading from the N-terminus, the 336-residue chain is DNA-directed RNA polymerase subunit alpha (336 aa).

The interval 1-226 (MLIAQRPTLS…ELFGLARELN (226 aa)) is alpha N-terminal domain (alpha-NTD). The interval 243–336 (LAADMALPIE…SDDAFGDDEL (94 aa)) is alpha C-terminal domain (alpha-CTD).

The protein belongs to the RNA polymerase alpha chain family. Homodimer. The RNAP catalytic core consists of 2 alpha, 1 beta, 1 beta' and 1 omega subunit. When a sigma factor is associated with the core the holoenzyme is formed, which can initiate transcription.

It carries out the reaction RNA(n) + a ribonucleoside 5'-triphosphate = RNA(n+1) + diphosphate. Functionally, DNA-dependent RNA polymerase catalyzes the transcription of DNA into RNA using the four ribonucleoside triphosphates as substrates. The chain is DNA-directed RNA polymerase subunit alpha from Renibacterium salmoninarum (strain ATCC 33209 / DSM 20767 / JCM 11484 / NBRC 15589 / NCIMB 2235).